The following is a 232-amino-acid chain: N-acetyltransferase 8B (232 aa).

At 1–62 (MPRFEAQKSS…FLLLLGVPLA (62 aa)) the chain is on the cytoplasmic side. Residues 63-83 (LVLVSGSWILAVICIFFLLLL) traverse the membrane as a helical; Signal-anchor for type II membrane protein segment. The 146-residue stretch at 79–224 (FLLLLLRLLA…WRLVDICFIQ (146 aa)) folds into the N-acetyltransferase domain. The Lumenal segment spans residues 84-232 (LRLLARQPWK…IQLNYSFPSA (149 aa)). K109 is subject to N6-acetyllysine.

Belongs to the NAT8 family. Post-translationally, acetylation on Lys-109 modulates enzymatic activity. As to expression, expressed in brain (at protein level).

The protein resides in the endoplasmic reticulum-Golgi intermediate compartment membrane. It localises to the endoplasmic reticulum membrane. The enzyme catalyses L-lysyl-[protein] + acetyl-CoA = N(6)-acetyl-L-lysyl-[protein] + CoA + H(+). Endoplasmic reticulum (ER)-membrane-bound lysine N-acetyltransferase catalyzing the N6-acetylation of lysine residues in the lumen of the ER in various proteins, including PROM1 and BACE1, using acetyl-CoA as acetyl donor. Thereby, may regulate apoptosis through the acetylation and the regulation of the expression of PROM1. Acetylates and stabilizes BACE1 immature protein, leading to increased steady-state levels in neurons. By acting on BACE1 expression, may regulate amyloid beta-peptide formation. N(6)-lysine acetylation in ER maintains protein homeostasis and regulates reticulophagy. The sequence is that of N-acetyltransferase 8B from Mus musculus (Mouse).